A 517-amino-acid chain; its full sequence is 2-isopropylmalate synthase (517 aa).

The 263-residue stretch at 4 to 266 (INFFDTTLRD…ESTIQLNEIK (263 aa)) folds into the Pyruvate carboxyltransferase domain. Mn(2+)-binding residues include aspartate 13, histidine 201, histidine 203, and asparagine 237. The tract at residues 391 to 517 (EFESLQVHYG…IEIEKHHAIS (127 aa)) is regulatory domain.

The protein belongs to the alpha-IPM synthase/homocitrate synthase family. LeuA type 1 subfamily. Homodimer. Mn(2+) is required as a cofactor.

The protein localises to the cytoplasm. The enzyme catalyses 3-methyl-2-oxobutanoate + acetyl-CoA + H2O = (2S)-2-isopropylmalate + CoA + H(+). It participates in amino-acid biosynthesis; L-leucine biosynthesis; L-leucine from 3-methyl-2-oxobutanoate: step 1/4. Its function is as follows. Catalyzes the condensation of the acetyl group of acetyl-CoA with 3-methyl-2-oxobutanoate (2-ketoisovalerate) to form 3-carboxy-3-hydroxy-4-methylpentanoate (2-isopropylmalate). This Bacillus pumilus (strain SAFR-032) protein is 2-isopropylmalate synthase.